We begin with the raw amino-acid sequence, 427 residues long: Phosphoribosylamine--glycine ligase (427 aa).

The 205-residue stretch at 109 to 313 folds into the ATP-grasp domain; that stretch reads RNLMAEYKIE…LAEVVTGITE (205 aa). 136–191 lines the ATP pocket; it reads VRDHDGDLAVKPIGLTGGKGVRIMGEQVDRAGAIEYIREINGGVVLEERLTGEEFT. Q271, E283, and N285 together coordinate Mg(2+). Mn(2+) is bound by residues Q271, E283, and N285.

It belongs to the GARS family. Mg(2+) serves as cofactor. The cofactor is Mn(2+).

It carries out the reaction 5-phospho-beta-D-ribosylamine + glycine + ATP = N(1)-(5-phospho-beta-D-ribosyl)glycinamide + ADP + phosphate + H(+). The protein operates within purine metabolism; IMP biosynthesis via de novo pathway; N(1)-(5-phospho-D-ribosyl)glycinamide from 5-phospho-alpha-D-ribose 1-diphosphate: step 2/2. This chain is Phosphoribosylamine--glycine ligase, found in Methanoregula boonei (strain DSM 21154 / JCM 14090 / 6A8).